The chain runs to 197 residues: Phospholipid hydroperoxide glutathione peroxidase (197 aa).

Position 40 is a phosphoserine (Ser-40). Sec-73 is an active-site residue. Residue Sec-73 is a non-standard amino acid, selenocysteine. Phosphoserine is present on Val-78.

This sequence belongs to the glutathione peroxidase family. Monomer. Has a tendency to form higher mass oligomers. Interacts with FUNDC1; this interaction promotes GPX4 recruitment into mitochondria through TOM/TIM complex where it is degraded by mitophagy. Present primarily in testis. Expressed in flagella of epididymal sperm. Isoform Cytoplasmic: Highly expressed in testis. Present in spermatogonia, spermatocyte and spermatid (at protein level).

It is found in the nucleus. The protein resides in the nucleolus. It localises to the mitochondrion. The protein localises to the cytoplasm. It catalyses the reaction a hydroperoxy polyunsaturated fatty acid + 2 glutathione = a hydroxy polyunsaturated fatty acid + glutathione disulfide + H2O. It carries out the reaction 2 glutathione + H2O2 = glutathione disulfide + 2 H2O. The catalysed reaction is tert-butyl hydroperoxide + 2 glutathione = tert-butanol + glutathione disulfide + H2O. The enzyme catalyses cumene hydroperoxide + 2 glutathione = 2-phenylpropan-2-ol + glutathione disulfide + H2O. It catalyses the reaction (9S)-hydroperoxy-(10E,12Z)-octadecadienoate + 2 glutathione = (9S)-hydroxy-(10E,12Z)-octadecadienoate + glutathione disulfide + H2O. It carries out the reaction (13S)-hydroperoxy-(9Z,11E)-octadecadienoate + 2 glutathione = (13S)-hydroxy-(9Z,11E)-octadecadienoate + glutathione disulfide + H2O. The catalysed reaction is (5S)-hydroperoxy-(6E,8Z,11Z,14Z)-eicosatetraenoate + 2 glutathione = (5S)-hydroxy-(6E,8Z,11Z,14Z)-eicosatetraenoate + glutathione disulfide + H2O. The enzyme catalyses (12R)-hydroperoxy-(5Z,8Z,10E,14Z)-eicosatetraenoate + 2 glutathione = (12R)-hydroxy-(5Z,8Z,10E,14Z)-eicosatetraenoate + glutathione disulfide + H2O. It catalyses the reaction (12S)-hydroperoxy-(5Z,8Z,10E,14Z)-eicosatetraenoate + 2 glutathione = (12S)-hydroxy-(5Z,8Z,10E,14Z)-eicosatetraenoate + glutathione disulfide + H2O. It carries out the reaction (15S)-hydroperoxy-(5Z,8Z,11Z,13E)-eicosatetraenoate + 2 glutathione = (15S)-hydroxy-(5Z,8Z,11Z,13E)-eicosatetraenoate + glutathione disulfide + H2O. The catalysed reaction is (5S)-hydroperoxy-(6E,8Z,11Z,14Z,17Z)-eicosapentaenoate + 2 glutathione = (5S)-hydroxy-(6E,8Z,11Z,14Z,17Z)-eicosapentaenoate + glutathione disulfide + H2O. The enzyme catalyses (12S)-hydroperoxy-(5Z,8Z,10E,14Z,17Z)-eicosapentaenoate + 2 glutathione = (12S)-hydroxy-(5Z,8Z,10E,14Z,17Z)-eicosapentaenoate + glutathione disulfide + H2O. It catalyses the reaction (15S)-hydroperoxy-(5Z,8Z,11Z,13E,17Z)-eicosapentaenoate + 2 glutathione = (15S)-hydroxy-(5Z,8Z,11Z,13E,17Z)-eicosapentaenoate + glutathione disulfide + H2O. It carries out the reaction (15S)-hydroperoxy-(11Z,13E)-eicosadienoate + 2 glutathione = (15S)-hydroxy-(11Z,13E)-eicosadienoate + glutathione disulfide + H2O. The catalysed reaction is (17S)-hydroperoxy-(4Z,7Z,10Z,13Z,15E,19Z)-docosahexaenoate + 2 glutathione = (17S)-hydroxy-(4Z,7Z,10Z,13Z,15E,19Z)-docosahexaenoate + glutathione disulfide + H2O. The enzyme catalyses a hydroperoxy-1,2-diacyl-glycero-3-phosphocholine + 2 glutathione = a hydroxy-1,2-diacyl-glycero-3-phosphocholine + glutathione disulfide + H2O. Essential antioxidant peroxidase that directly reduces phospholipid hydroperoxide even if they are incorporated in membranes and lipoproteins. Can also reduce fatty acid hydroperoxide, cholesterol hydroperoxide and thymine hydroperoxide. Plays a key role in protecting cells from oxidative damage by preventing membrane lipid peroxidation. Required to prevent cells from ferroptosis, a non-apoptotic cell death resulting from an iron-dependent accumulation of lipid reactive oxygen species. The presence of selenocysteine (Sec) versus Cys at the active site is essential for life: it provides resistance to overoxidation and prevents cells against ferroptosis. The presence of Sec at the active site is also essential for the survival of a specific type of parvalbumin-positive interneurons, thereby preventing against fatal epileptic seizures. May be required to protect cells from the toxicity of ingested lipid hydroperoxides. Required for normal sperm development and male fertility. Essential for maturation and survival of photoreceptor cells. Plays a role in a primary T-cell response to viral and parasitic infection by protecting T-cells from ferroptosis and by supporting T-cell expansion. Plays a role of glutathione peroxidase in platelets in the arachidonic acid metabolism. Reduces hydroperoxy ester lipids formed by a 15-lipoxygenase that may play a role as down-regulator of the cellular 15-lipoxygenase pathway. Can also reduce small soluble hydroperoxides such as H2O2, cumene hydroperoxide and tert-butyl hydroperoxide. Its function is as follows. Specifically able to suppress the production of leukotriene and prostaglandin in response to several stimuli by reducing fatty acid hydroperoxide. Functionally, specifically required to prevent mitochondrial cell death by mediating reduction of cardiolipin hydroperoxide. Also required for normal sperm development and male fertility. In terms of biological role, required for male fertility by stabilizing the condensed chromatin in sperm nuclei. The chain is Phospholipid hydroperoxide glutathione peroxidase from Rattus norvegicus (Rat).